A 442-amino-acid chain; its full sequence is D-serine dehydratase 1 (442 aa).

K118 carries the post-translational modification N6-(pyridoxal phosphate)lysine.

It belongs to the serine/threonine dehydratase family. DsdA subfamily. In terms of assembly, monomer. It depends on pyridoxal 5'-phosphate as a cofactor.

The catalysed reaction is D-serine = pyruvate + NH4(+). The chain is D-serine dehydratase 1 from Escherichia coli (strain UTI89 / UPEC).